The sequence spans 931 residues: Scaffold attachment factor B1 (931 aa).

The segment covering 1 to 24 (MAETLSGLGDSGAASAAAVSSAAS) has biased composition (low complexity). A disordered region spans residues 1 to 35 (MAETLSGLGDSGAASAAAVSSAASETGTRRLSDLR). Ala2 is modified (N-acetylalanine). Ser24 and Ser55 each carry phosphoserine. In terms of domain architecture, SAP spans 31-65 (LSDLRVIDLRAELRKRNLTSSGNKSVLMERLKKAI). The disordered stretch occupies residues 64–121 (AIEEEGGNPDEIEVISEGNKKMPKRPSKGKKPEDEGVEDNGLEENSGDGQEDVETSLE). The span at 67-77 (EEGGNPDEIEV) shows a compositional bias: acidic residues. At Ser79 the chain carries Phosphoserine. The segment covering 98-118 (EGVEDNGLEENSGDGQEDVET) has biased composition (acidic residues). Residues Lys171 and Lys185 each participate in a glycyl lysine isopeptide (Lys-Gly) (interchain with G-Cter in SUMO2) cross-link. Phosphoserine is present on residues Ser194, Ser196, and Ser208. 2 disordered regions span residues 205-304 (EEAS…TRCQ) and 316-430 (KREP…GRNF). A compositionally biased stretch (basic and acidic residues) spans 224 to 233 (CKSEPVKEEG). A Glycyl lysine isopeptide (Lys-Gly) (interchain with G-Cter in SUMO) cross-link involves residue Lys230. A compositionally biased stretch (acidic residues) spans 267–287 (EEEEEEEEEEEQEEEQEEEGD). Lys316 participates in a covalent cross-link: Glycyl lysine isopeptide (Lys-Gly) (interchain with G-Cter in SUMO). The span at 341 to 356 (EQSSTAAQLPETTSQE) shows a compositional bias: polar residues. Basic and acidic residues predominate over residues 368 to 380 (EPRDSKDDVKKFA). Residue Lys403 forms a Glycyl lysine isopeptide (Lys-Gly) (interchain with G-Cter in SUMO2) linkage. Residues Ser405 and Ser406 each carry the phosphoserine modification. Residues 412 to 423 (DTKRLSREEKGR) are compositionally biased toward basic and acidic residues. Lys414 is covalently cross-linked (Glycyl lysine isopeptide (Lys-Gly) (interchain with G-Cter in SUMO2)). Residues 428–506 (RNFWVSGLSS…KMISVEKAKS (79 aa)) enclose the RRM domain. A Phosphoserine modification is found at Ser437. 2 stretches are compositionally biased toward basic and acidic residues: residues 500–573 (SVEK…ERSR) and 581–592 (GTERTVVMDKSK). Disordered stretches follow at residues 500–663 (SVEK…WERE), 691–720 (RLER…LRRQ), 759–843 (RYHS…PRRD), and 872–931 (RWQG…QQTQ). Residues Lys505, Lys536, Lys565, and Lys592 each participate in a glycyl lysine isopeptide (Lys-Gly) (interchain with G-Cter in SUMO2) cross-link. Residues 550–816 (TDDGSTEKSK…RHGGPERHGR (267 aa)) form an interaction with POLR2A; SFRS1; SFRS9 and SFRS10 region. Lys600 participates in a covalent cross-link: Glycyl lysine isopeptide (Lys-Gly) (interchain with G-Cter in SUMO1); alternate. Lys600 is covalently cross-linked (Glycyl lysine isopeptide (Lys-Gly) (interchain with G-Cter in SUMO2); alternate). Ser602, Ser604, Ser623, and Ser626 each carry phosphoserine. Positions 603–663 (GSKERASKSQ…QRLQAQWERE (61 aa)) are enriched in basic and acidic residues. A Nuclear localization signal motif is present at residues 621-638 (KRSVVSFDKVKESRKSRD). Lys629 carries the N6-acetyllysine modification. The span at 759 to 820 (RYHSDFSRQD…PERHGRDSRD (62 aa)) shows a compositional bias: basic and acidic residues. Position 834 is an omega-N-methylarginine (Arg834). Asymmetric dimethylarginine is present on residues Arg892, Arg898, Arg908, and Arg914.

In terms of assembly, monomer and homodimer. Interacts with KHDRBS3. Interacts with CLK2. Interacts with POLR2A, ASF/SRSF1, SRp30c/SRFS9 and TRA2B/SFRS10. Interacts with SRPK1 and inhibits its activity. Interacts with RBMX. Interacts with FUS. Interacts with ZBED4. Phosphorylated by CDC-like kinase 2 (CLK2). Post-translationally, sumoylated by PIAS1 with SUMO1 and SUMO2/3, desumoylated by SENP1. Sumoylation is required for transcriptional repressor activity.

The protein resides in the nucleus. Functionally, binds to scaffold/matrix attachment region (S/MAR) DNA and forms a molecular assembly point to allow the formation of a 'transcriptosomal' complex (consisting of SR proteins and RNA polymerase II) coupling transcription and RNA processing. Functions as an estrogen receptor corepressor and can also bind to the HSP27 promoter and decrease its transcription. Thereby acts as a negative regulator of cell proliferation. When associated with RBMX, binds to and stimulates transcription from the SREBF1 promoter. In Rattus norvegicus (Rat), this protein is Scaffold attachment factor B1 (Safb).